A 412-amino-acid chain; its full sequence is Serine hydroxymethyltransferase (412 aa).

(6S)-5,6,7,8-tetrahydrofolate contacts are provided by residues L117 and G121–L123. N6-(pyridoxal phosphate)lysine is present on K226. S349 to F351 serves as a coordination point for (6S)-5,6,7,8-tetrahydrofolate.

This sequence belongs to the SHMT family. In terms of assembly, homodimer. The cofactor is pyridoxal 5'-phosphate.

The protein resides in the cytoplasm. It catalyses the reaction (6R)-5,10-methylene-5,6,7,8-tetrahydrofolate + glycine + H2O = (6S)-5,6,7,8-tetrahydrofolate + L-serine. Its pathway is one-carbon metabolism; tetrahydrofolate interconversion. It participates in amino-acid biosynthesis; glycine biosynthesis; glycine from L-serine: step 1/1. In terms of biological role, catalyzes the reversible interconversion of serine and glycine with tetrahydrofolate (THF) serving as the one-carbon carrier. This reaction serves as the major source of one-carbon groups required for the biosynthesis of purines, thymidylate, methionine, and other important biomolecules. Also exhibits THF-independent aldolase activity toward beta-hydroxyamino acids, producing glycine and aldehydes, via a retro-aldol mechanism. In Nitratidesulfovibrio vulgaris (strain ATCC 29579 / DSM 644 / CCUG 34227 / NCIMB 8303 / VKM B-1760 / Hildenborough) (Desulfovibrio vulgaris), this protein is Serine hydroxymethyltransferase.